The following is an 852-amino-acid chain: DNA mismatch repair protein MutS (852 aa).

602–609 contacts ATP; that stretch reads GPNMSGKS.

Belongs to the DNA mismatch repair MutS family.

Functionally, this protein is involved in the repair of mismatches in DNA. It is possible that it carries out the mismatch recognition step. This protein has a weak ATPase activity. In Streptococcus thermophilus (strain ATCC BAA-250 / LMG 18311), this protein is DNA mismatch repair protein MutS.